Here is a 485-residue protein sequence, read N- to C-terminus: MFS-type transporter phm3 (485 aa).

The segment at Met1 to Thr22 is disordered. The next 12 helical transmembrane spans lie at Phe55 to Ala75, Ile83 to Leu103, Leu113 to Ser133, Phe144 to Leu164, Ala175 to Val195, Trp203 to Met223, Pro278 to Phe298, Gly317 to Leu337, Leu357 to Ser377, Trp384 to Pro404, Ala421 to Pro441, and Leu449 to Val469.

The protein belongs to the major facilitator superfamily.

The protein resides in the cell membrane. In terms of biological role, MFS-type transporter; part of the gene cluster that mediates the biosynthesis of the trans-fused decalin-containing tetramic acid phomasetin. This Pyrenochaetopsis sp protein is MFS-type transporter phm3.